Reading from the N-terminus, the 854-residue chain is Lysine-specific demethylase 3 (854 aa).

The tract at residues 64 to 88 is disordered; the sequence is QRVQQEEESLGQVPPLTEEEQQRHD. The 206-residue stretch at 601-806 folds into the JmjC domain; the sequence is LRTGNLNIAS…HCYHLTHEFR (206 aa). The Fe cation site is built by His-643, Asp-645, and His-774.

The protein belongs to the JHDM2-like histone demethylase family. It depends on Fe(2+) as a cofactor. Expressed in neurons close to the dorsal lateral neurons involved in circadian rhythm.

It localises to the nucleus. It is found in the cytoplasm. The catalysed reaction is N(6),N(6)-dimethyl-L-lysyl(9)-[histone H3] + 2 2-oxoglutarate + 2 O2 = L-lysyl(9)-[histone H3] + 2 formaldehyde + 2 succinate + 2 CO2. Functionally, histone demethylase that specifically demethylates 'Lys-10' of histone H3 (H3K9), thereby playing a central role in histone code. Demethylation of Lys residue generates formaldehyde and succinate. Probably involved in regulation of chromatin structure, promoting expansion of euchromatin. Negatively regulates rhino-dependent piRNA production capacity of several genomic regions; may help define the frontiers of piRNA clusters by regulating histone methylation levels. May be involved in regulation of behavior and circadian rhythms. The polypeptide is Lysine-specific demethylase 3 (Drosophila melanogaster (Fruit fly)).